Reading from the N-terminus, the 160-residue chain is Serine-protein kinase RsbW (160 aa).

The protein belongs to the anti-sigma-factor family.

The catalysed reaction is L-seryl-[protein] + ATP = O-phospho-L-seryl-[protein] + ADP + H(+). It catalyses the reaction L-threonyl-[protein] + ATP = O-phospho-L-threonyl-[protein] + ADP + H(+). In terms of biological role, negative regulator of sigma-B activity. Phosphorylates and inactivates its specific antagonist protein, RsbV. Upon phosphorylation of RsbV, RsbW is released and binds to sigma-B, thereby blocking its ability to form an RNA polymerase holoenzyme (E-sigma-B). This is Serine-protein kinase RsbW from Bacillus mycoides (strain KBAB4) (Bacillus weihenstephanensis).